Reading from the N-terminus, the 871-residue chain is MNISEWIEQSRSVFKAQLDTKIKIIGIIGKDYPDHGKGDNINCYLRENVFPVATSDNETCTIFAHFSEDEQLLFLVLNGVDDVANLRKCMESESKNYFEAMAESESQQMRLLHFLFISCHFIVIFEQTSRIDLEFIRFLKKVNTLRSLNRRKVSQRLRDVDFDFDSDGRLTVPYVLMAFQRNNIRTDTNITKKRELYEKLEKNLDHQLTDILKLYDLTGSGNSALCQLSESLQVVHLLNPDSVKRDIITEMFDIFMAEAENGNVARVAANHKLTSNNAFVRFLEDRFRAEKNEISLNIAIDMLEALQFVLDGSLEEKPESLRSQTQTFIKRIQSDHMEEARRLYTNETRPVSGERRGGGFRITEQETMDPSVKIRSKQEHLIRFNEATCYIETVVGINQQEILSQVQTQCNDMWQSDLRACESISMMGHPCVKKVHPTYGDQTVPEARWTAHDASNTLVSTCVCGNKQLVRQEPFTLKEANFDFYEHPDFNCCKGLWRYQFQLYQEDTEEKDDIMWADRESNSLRAAKKMAQREDELAVELDDMELPESLQQSYTSSEDSSEDDDDFAIQTASSEDSLSGSDSYARPGSRRDEFESSKTARDMAVYFAKRIQKLEKLEKMDDFLMGVPNTLTIGKLPMFPSFFLTSLGESNLYKHGAGLKNQPNFKLGGEYLTPAVVFLDVDLDVWCRDLVKFRTDDYTRRGTKDLKDDMPRVKLFVGFEYECSRGHRFFVDHNGEPLIYPRNVNVLKESSARASLGNILNADLPLRRPCTCRKPPLKSAQLQKIHVVTPKAPVKITIDPKILVPGHEGTYGTGQEPLELHHSKYYILHLPVVYSGPSGTWMPGEYNSERMGTLKGGSIKVVYKPVMPFRW.

The disordered stretch occupies residues 541 to 596 (LDDMELPESLQQSYTSSEDSSEDDDDFAIQTASSEDSLSGSDSYARPGSRRDEFES). The segment covering 573 to 583 (SSEDSLSGSDS) has biased composition (low complexity).

Belongs to the SMG8 family.

Its function is as follows. Involved in nonsense-mediated decay (NMD) of mRNAs containing premature stop codons. Probable component of kinase complex containing smg-1 and recruited to stalled ribosomes. In Caenorhabditis briggsae, this protein is Nonsense-mediated mRNA decay factor SMG8 (smg-8).